The sequence spans 518 residues: Glutamate--cysteine ligase (518 aa).

This sequence belongs to the glutamate--cysteine ligase type 1 family. Type 1 subfamily.

It catalyses the reaction L-cysteine + L-glutamate + ATP = gamma-L-glutamyl-L-cysteine + ADP + phosphate + H(+). It participates in sulfur metabolism; glutathione biosynthesis; glutathione from L-cysteine and L-glutamate: step 1/2. In Salmonella agona (strain SL483), this protein is Glutamate--cysteine ligase.